We begin with the raw amino-acid sequence, 420 residues long: Serine hydroxymethyltransferase (420 aa).

Residues Leu117 and 121–123 (GHL) contribute to the (6S)-5,6,7,8-tetrahydrofolate site. N6-(pyridoxal phosphate)lysine is present on Lys226.

This sequence belongs to the SHMT family. Homodimer. The cofactor is pyridoxal 5'-phosphate.

It is found in the cytoplasm. It catalyses the reaction (6R)-5,10-methylene-5,6,7,8-tetrahydrofolate + glycine + H2O = (6S)-5,6,7,8-tetrahydrofolate + L-serine. It participates in one-carbon metabolism; tetrahydrofolate interconversion. The protein operates within amino-acid biosynthesis; glycine biosynthesis; glycine from L-serine: step 1/1. In terms of biological role, catalyzes the reversible interconversion of serine and glycine with tetrahydrofolate (THF) serving as the one-carbon carrier. This reaction serves as the major source of one-carbon groups required for the biosynthesis of purines, thymidylate, methionine, and other important biomolecules. Also exhibits THF-independent aldolase activity toward beta-hydroxyamino acids, producing glycine and aldehydes, via a retro-aldol mechanism. In Rhodopirellula baltica (strain DSM 10527 / NCIMB 13988 / SH1), this protein is Serine hydroxymethyltransferase.